The sequence spans 147 residues: Hemoglobin subunit beta (147 aa).

One can recognise a Globin domain in the interval 3-147 (HWTPEEKQYI…VAHALALGYH (145 aa)). Residues histidine 64 and histidine 93 each contribute to the heme b site.

This sequence belongs to the globin family. In terms of assembly, heterotetramer of two alpha-D chains and two beta chains. As to expression, red blood cells.

Functionally, involved in oxygen transport from the lung to the various peripheral tissues. This chain is Hemoglobin subunit beta (HBB), found in Chelonoidis niger (Galapagos giant tortoise).